The following is a 331-amino-acid chain: Pectinesterase (331 aa).

The signal sequence occupies residues 1 to 17 (MVKSVLASALFAVSALA). Position 139 (Gln139) interacts with substrate. The active-site Proton donor is Asp162. Asp183 (nucleophile) is an active-site residue. 2 residues coordinate substrate: Arg248 and Trp250.

It belongs to the pectinesterase family.

The protein resides in the secreted. It carries out the reaction [(1-&gt;4)-alpha-D-galacturonosyl methyl ester](n) + n H2O = [(1-&gt;4)-alpha-D-galacturonosyl](n) + n methanol + n H(+). It functions in the pathway glycan metabolism; pectin degradation; 2-dehydro-3-deoxy-D-gluconate from pectin: step 1/5. In terms of biological role, involved in maceration and soft-rotting of plant tissue. This is Pectinesterase (pme1) from Aspergillus aculeatus.